The following is a 486-amino-acid chain: Coronin-1B (486 aa).

The residue at position 2 (Ser2) is a Phosphoserine; by PKC. 5 WD repeats span residues 80–120 (GHTG…LTSP), 130–170 (GHTK…ELYR), 174–213 (LHPD…LVAE), 217–260 (AHEG…EPMA), and 265–305 (DSSN…PYIH). A disordered region spans residues 404–444 (LKVSRRNVLSDSRPTSAARPAAPAPAAPAPAAAASSSLSGA). A compositionally biased stretch (low complexity) spans 432 to 444 (APAAAASSSLSGA). Residues 446-484 (EAGKLEEVMRELRALRALVKEQGERIGRLEEQLGRVENG) adopt a coiled-coil conformation.

It belongs to the WD repeat coronin family. As to quaternary structure, forms homooligomers, but does not form complexes with the other coronins. Interacts with Arp2/3 complex components, including ACTR2, ARPC1B and ARPC2. Binds actin. In terms of processing, phosphorylated in vivo by PKC in response to cholinergic stimulation. Phosphorylation on Ser-2 regulates the interaction with the Arp2/3 complex and cell motility in fibroblasts. Phosphorylation does not seem to affect subcellular location.

It localises to the cytoplasm. It is found in the cytoskeleton. The protein localises to the stress fiber. Its function is as follows. Regulates leading edge dynamics and cell motility in fibroblasts. May be involved in cytokinesis and signal transduction. The polypeptide is Coronin-1B (CORO1B) (Oryctolagus cuniculus (Rabbit)).